The chain runs to 373 residues: 4-hydroxy-3-methylbut-2-en-1-yl diphosphate synthase (flavodoxin) (373 aa).

[4Fe-4S] cluster contacts are provided by C270, C273, C305, and E312.

Belongs to the IspG family. Requires [4Fe-4S] cluster as cofactor.

It catalyses the reaction (2E)-4-hydroxy-3-methylbut-2-enyl diphosphate + oxidized [flavodoxin] + H2O + 2 H(+) = 2-C-methyl-D-erythritol 2,4-cyclic diphosphate + reduced [flavodoxin]. The protein operates within isoprenoid biosynthesis; isopentenyl diphosphate biosynthesis via DXP pathway; isopentenyl diphosphate from 1-deoxy-D-xylulose 5-phosphate: step 5/6. Functionally, converts 2C-methyl-D-erythritol 2,4-cyclodiphosphate (ME-2,4cPP) into 1-hydroxy-2-methyl-2-(E)-butenyl 4-diphosphate. This chain is 4-hydroxy-3-methylbut-2-en-1-yl diphosphate synthase (flavodoxin), found in Photorhabdus laumondii subsp. laumondii (strain DSM 15139 / CIP 105565 / TT01) (Photorhabdus luminescens subsp. laumondii).